Consider the following 237-residue polypeptide: Myelin protein zero-like protein 3 (237 aa).

Positions 1-32 (MQLARGTVGGRGCALFPLLSILVVQGARIVLS) are cleaved as a signal peptide. The region spanning 33–149 (LEISADAHVR…NIPLTELTVT (117 aa)) is the Ig-like V-type domain. The Extracellular segment spans residues 33 to 159 (LEISADAHVR…ERGFGTMLSS (127 aa)). A disulfide bridge links cysteine 53 with cysteine 129. N-linked (GlcNAc...) asparagine glycosylation occurs at asparagine 124. Residues 160 to 180 (VALLSILVFVPSAVVVILLLV) form a helical membrane-spanning segment. Residues 181–237 (RMGRKATGVQKRSRSGYKKSSIEVSDDTDQEDSNDCMTRLCVRCAECLDSDYEEEAY) are Cytoplasmic-facing.

Belongs to the myelin P0 protein family. As to expression, present in all tissues tested, including the skin. Present in the keratinocytes and sebocytes in the skin (at protein level).

The protein localises to the membrane. Mediates homophilic cell-cell adhesion. This Mus musculus (Mouse) protein is Myelin protein zero-like protein 3 (Mpzl3).